Consider the following 126-residue polypeptide: Aspartate 1-decarboxylase (126 aa).

Ser-25 functions as the Schiff-base intermediate with substrate; via pyruvic acid in the catalytic mechanism. The residue at position 25 (Ser-25) is a Pyruvic acid (Ser). Thr-57 provides a ligand contact to substrate. Tyr-58 functions as the Proton donor in the catalytic mechanism. Residue 73 to 75 (GAA) participates in substrate binding.

This sequence belongs to the PanD family. As to quaternary structure, heterooctamer of four alpha and four beta subunits. The cofactor is pyruvate. Is synthesized initially as an inactive proenzyme, which is activated by self-cleavage at a specific serine bond to produce a beta-subunit with a hydroxyl group at its C-terminus and an alpha-subunit with a pyruvoyl group at its N-terminus.

It is found in the cytoplasm. The enzyme catalyses L-aspartate + H(+) = beta-alanine + CO2. It functions in the pathway cofactor biosynthesis; (R)-pantothenate biosynthesis; beta-alanine from L-aspartate: step 1/1. Catalyzes the pyruvoyl-dependent decarboxylation of aspartate to produce beta-alanine. In Escherichia coli O6:K15:H31 (strain 536 / UPEC), this protein is Aspartate 1-decarboxylase.